Reading from the N-terminus, the 453-residue chain is Tol-Pal system protein TolB (453 aa).

A signal peptide spans Met1 to Leu34.

The protein belongs to the TolB family. In terms of assembly, the Tol-Pal system is composed of five core proteins: the inner membrane proteins TolA, TolQ and TolR, the periplasmic protein TolB and the outer membrane protein Pal. They form a network linking the inner and outer membranes and the peptidoglycan layer.

Its subcellular location is the periplasm. Its function is as follows. Part of the Tol-Pal system, which plays a role in outer membrane invagination during cell division and is important for maintaining outer membrane integrity. TolB occupies a key intermediary position in the Tol-Pal system because it communicates directly with both membrane-embedded components, Pal in the outer membrane and TolA in the inner membrane. This Blochmanniella pennsylvanica (strain BPEN) protein is Tol-Pal system protein TolB.